Consider the following 245-residue polypeptide: 4-hydroxy-tetrahydrodipicolinate reductase (245 aa).

NAD(+)-binding positions include 7–12 (GAKGKV), 75–77 (GTT), and 102–105 (APNF). H132 acts as the Proton donor/acceptor in catalysis. H133 provides a ligand contact to (S)-2,3,4,5-tetrahydrodipicolinate. K136 functions as the Proton donor in the catalytic mechanism. 142–143 (GT) contacts (S)-2,3,4,5-tetrahydrodipicolinate.

This sequence belongs to the DapB family.

Its subcellular location is the cytoplasm. The catalysed reaction is (S)-2,3,4,5-tetrahydrodipicolinate + NAD(+) + H2O = (2S,4S)-4-hydroxy-2,3,4,5-tetrahydrodipicolinate + NADH + H(+). The enzyme catalyses (S)-2,3,4,5-tetrahydrodipicolinate + NADP(+) + H2O = (2S,4S)-4-hydroxy-2,3,4,5-tetrahydrodipicolinate + NADPH + H(+). The protein operates within amino-acid biosynthesis; L-lysine biosynthesis via DAP pathway; (S)-tetrahydrodipicolinate from L-aspartate: step 4/4. In terms of biological role, catalyzes the conversion of 4-hydroxy-tetrahydrodipicolinate (HTPA) to tetrahydrodipicolinate. This is 4-hydroxy-tetrahydrodipicolinate reductase from Mycobacterium ulcerans (strain Agy99).